A 92-amino-acid chain; its full sequence is Small ribosomal subunit protein bS18 (92 aa).

The disordered stretch occupies residues 1 to 28 (MTQQGNSGERKPRGKGPKRPRKPKVDPF). Over residues 12-22 (PRGKGPKRPRK) the composition is skewed to basic residues.

The protein belongs to the bacterial ribosomal protein bS18 family. As to quaternary structure, part of the 30S ribosomal subunit. Forms a tight heterodimer with protein bS6.

Binds as a heterodimer with protein bS6 to the central domain of the 16S rRNA, where it helps stabilize the platform of the 30S subunit. In Deinococcus radiodurans (strain ATCC 13939 / DSM 20539 / JCM 16871 / CCUG 27074 / LMG 4051 / NBRC 15346 / NCIMB 9279 / VKM B-1422 / R1), this protein is Small ribosomal subunit protein bS18.